Reading from the N-terminus, the 151-residue chain is Large ribosomal subunit protein bL9 (151 aa).

Belongs to the bacterial ribosomal protein bL9 family.

Binds to the 23S rRNA. This chain is Large ribosomal subunit protein bL9, found in Carboxydothermus hydrogenoformans (strain ATCC BAA-161 / DSM 6008 / Z-2901).